The sequence spans 460 residues: MALNVVILAAGKGTRMRSDLPKVLHPIAHKSMVQHVIDTAHKVGSDAIQLVYGYGADKLQASLGEQQLNWVLQAEQLGTGHAVAQASPHIADNDTVLILYGDVPLIQQSTLEALLAARPENGVAILTVNLANPMGYGRIVRTPCEGQEQGKVVGIIEQKDATAEQLLINEINTGIMAVPGKQLKAWLSRLSNNNAQGEYYLTDIIAMAHDDGVAIDTAQPQSAIEVEGANNRVQLAQLERAYQAREAEKLMLAGANLRDPSRIDIRGEVTVGMDVMIDINVIFEGKVTLGNNVTIGAGAILIDCEIADNAEIKPYSIIEGAKLGVAASAGPFARLRPGAELKQDAHIGNFVEVKKAVIGVGSKAGHLAYLGDAVIGDGVNIGAGTITCNYDGANKHLTVIEDNVFVGSDTQLVAPVTIGKGATLGAGSTITRDVGENELVITRVKQKHLTGWQRPVKIKK.

The segment at 1 to 232 (MALNVVILAA…AIEVEGANNR (232 aa)) is pyrophosphorylase. UDP-N-acetyl-alpha-D-glucosamine is bound by residues 8 to 11 (LAAG), K22, Q73, 78 to 79 (GT), 100 to 102 (YGD), G137, E157, N172, and N230. A Mg(2+)-binding site is contributed by D102. N230 is a binding site for Mg(2+). Residues 233–253 (VQLAQLERAYQAREAEKLMLA) are linker. Residues 254–460 (GANLRDPSRI…GWQRPVKIKK (207 aa)) are N-acetyltransferase. Positions 336 and 354 each coordinate UDP-N-acetyl-alpha-D-glucosamine. The active-site Proton acceptor is the H366. Residues Y369 and N380 each contribute to the UDP-N-acetyl-alpha-D-glucosamine site. Acetyl-CoA contacts are provided by residues A383, 389–390 (NY), S408, A426, and R443.

It in the N-terminal section; belongs to the N-acetylglucosamine-1-phosphate uridyltransferase family. This sequence in the C-terminal section; belongs to the transferase hexapeptide repeat family. In terms of assembly, homotrimer. The cofactor is Mg(2+).

It localises to the cytoplasm. The catalysed reaction is alpha-D-glucosamine 1-phosphate + acetyl-CoA = N-acetyl-alpha-D-glucosamine 1-phosphate + CoA + H(+). It carries out the reaction N-acetyl-alpha-D-glucosamine 1-phosphate + UTP + H(+) = UDP-N-acetyl-alpha-D-glucosamine + diphosphate. It functions in the pathway nucleotide-sugar biosynthesis; UDP-N-acetyl-alpha-D-glucosamine biosynthesis; N-acetyl-alpha-D-glucosamine 1-phosphate from alpha-D-glucosamine 6-phosphate (route II): step 2/2. The protein operates within nucleotide-sugar biosynthesis; UDP-N-acetyl-alpha-D-glucosamine biosynthesis; UDP-N-acetyl-alpha-D-glucosamine from N-acetyl-alpha-D-glucosamine 1-phosphate: step 1/1. Its pathway is bacterial outer membrane biogenesis; LPS lipid A biosynthesis. In terms of biological role, catalyzes the last two sequential reactions in the de novo biosynthetic pathway for UDP-N-acetylglucosamine (UDP-GlcNAc). The C-terminal domain catalyzes the transfer of acetyl group from acetyl coenzyme A to glucosamine-1-phosphate (GlcN-1-P) to produce N-acetylglucosamine-1-phosphate (GlcNAc-1-P), which is converted into UDP-GlcNAc by the transfer of uridine 5-monophosphate (from uridine 5-triphosphate), a reaction catalyzed by the N-terminal domain. The protein is Bifunctional protein GlmU of Shewanella baltica (strain OS223).